The primary structure comprises 101 residues: Large ribosomal subunit protein uL24 (101 aa).

It belongs to the universal ribosomal protein uL24 family. As to quaternary structure, part of the 50S ribosomal subunit.

Its function is as follows. One of two assembly initiator proteins, it binds directly to the 5'-end of the 23S rRNA, where it nucleates assembly of the 50S subunit. Functionally, one of the proteins that surrounds the polypeptide exit tunnel on the outside of the subunit. The protein is Large ribosomal subunit protein uL24 of Borrelia garinii subsp. bavariensis (strain ATCC BAA-2496 / DSM 23469 / PBi) (Borreliella bavariensis).